The chain runs to 101 residues: MAKQSMIARDVKRAKLADKFYAKREELKKIIYDINSSDEDRWAAVLKLQMLPRDSSPSRQRSRCRQTGRPHGVLSKFGLSRIKVREAAMRGEIPGLKKASW.

It belongs to the universal ribosomal protein uS14 family. As to quaternary structure, part of the 30S ribosomal subunit. Contacts proteins S3 and S10.

Functionally, binds 16S rRNA, required for the assembly of 30S particles and may also be responsible for determining the conformation of the 16S rRNA at the A site. This chain is Small ribosomal subunit protein uS14, found in Haemophilus ducreyi (strain 35000HP / ATCC 700724).